The chain runs to 396 residues: L-lactate dehydrogenase (396 aa).

Residues 1 to 380 enclose the FMN hydroxy acid dehydrogenase domain; it reads MIISAASDYR…SGDSLVQELG (380 aa). A substrate-binding site is contributed by Y24. FMN contacts are provided by S106 and Q127. Y129 serves as a coordination point for substrate. Residue T155 participates in FMN binding. R164 contacts substrate. Residue K251 coordinates FMN. Residue H275 is the Proton acceptor of the active site. R278 is a substrate binding site. Residue 306-330 coordinates FMN; sequence DSGIRNGLDVVRMIALGADTVLLGR.

Belongs to the FMN-dependent alpha-hydroxy acid dehydrogenase family. FMN serves as cofactor.

The protein localises to the cell inner membrane. The catalysed reaction is (S)-lactate + A = pyruvate + AH2. Its function is as follows. Catalyzes the conversion of L-lactate to pyruvate. Is coupled to the respiratory chain. The protein is L-lactate dehydrogenase of Salmonella paratyphi A (strain ATCC 9150 / SARB42).